The chain runs to 1014 residues: Klotho (1014 aa).

Positions 1 to 35 (MPASAPPRRPRPPPPSLSLSLLLVLLGLAGRRLRA) are cleaved as a signal peptide. At 36-983 (EPGDGAQTWA…ECSFFHTRKP (948 aa)) the chain is on the extracellular side. 2 glycosyl hydrolase-1 regions span residues 59-508 (FQGT…KNGF) and 517-955 (LEGT…SNGF). N-linked (GlcNAc...) asparagine glycosylation is found at Asn-161, Asn-285, Asn-346, Asn-609, Asn-614, and Asn-696. A helical membrane pass occupies residues 984-1004 (LVAFIAFLFFAFIVSLSLIFY). Residues 1005–1014 (YSKKGRRRYQ) lie on the Cytoplasmic side of the membrane.

Belongs to the glycosyl hydrolase 1 family. Klotho subfamily. Homodimer. Interacts with FGF23 and FGFR1.

It localises to the cell membrane. Its subcellular location is the apical cell membrane. The protein localises to the secreted. The catalysed reaction is a beta-D-glucuronoside + H2O = D-glucuronate + an alcohol. Functionally, may have weak glycosidase activity towards glucuronylated steroids. However, it lacks essential active site Glu residues at positions 241 and 874, suggesting it may be inactive as a glycosidase in vivo. May be involved in the regulation of calcium and phosphorus homeostasis by inhibiting the synthesis of active vitamin D. Essential factor for the specific interaction between FGF23 and FGFR1. In terms of biological role, the Klotho peptide generated by cleavage of the membrane-bound isoform may be an anti-aging circulating hormone which would extend life span by inhibiting insulin/IGF1 signaling. This chain is Klotho (KL), found in Macaca fascicularis (Crab-eating macaque).